The sequence spans 277 residues: Shikimate dehydrogenase (NADP(+)) (277 aa).

Shikimate-binding positions include 19–21 (SKS) and threonine 66. Catalysis depends on lysine 70, which acts as the Proton acceptor. Aspartate 82 serves as a coordination point for NADP(+). Shikimate contacts are provided by asparagine 91 and aspartate 107. Residues 133 to 137 (GAGGA), 157 to 162 (NRTRAR), and leucine 222 contribute to the NADP(+) site. Shikimate is bound at residue tyrosine 224. NADP(+) is bound at residue glycine 245.

The protein belongs to the shikimate dehydrogenase family. Homodimer.

It carries out the reaction shikimate + NADP(+) = 3-dehydroshikimate + NADPH + H(+). The protein operates within metabolic intermediate biosynthesis; chorismate biosynthesis; chorismate from D-erythrose 4-phosphate and phosphoenolpyruvate: step 4/7. Functionally, involved in the biosynthesis of the chorismate, which leads to the biosynthesis of aromatic amino acids. Catalyzes the reversible NADPH linked reduction of 3-dehydroshikimate (DHSA) to yield shikimate (SA). The sequence is that of Shikimate dehydrogenase (NADP(+)) from Roseobacter denitrificans (strain ATCC 33942 / OCh 114) (Erythrobacter sp. (strain OCh 114)).